Reading from the N-terminus, the 408-residue chain is Glutaryl-CoA dehydrogenase, mitochondrial (408 aa).

The N-terminal 13 residues, 1–13 (KGGKTQGRSAKSS), are a transit peptide targeting the mitochondrion. Substrate contacts are provided by residues 107-108 (RS) and Ser-156. FAD is bound by residues 147-156 (FGLTEPNHGS), Ser-156, and 182-184 (WIT). Residue Lys-210 is modified to N6-acetyllysine. A substrate-binding site is contributed by 257-264 (FGCLNNAR). FAD is bound by residues Arg-289, Gln-300, and 357–361 (DMLGG). Glu-384 serves as the catalytic Proton acceptor. Residue Gly-385 participates in substrate binding. FAD is bound by residues Thr-386, 386–388 (THD), and Phe-404.

Belongs to the acyl-CoA dehydrogenase family. As to quaternary structure, homotetramer. The cofactor is FAD.

The protein localises to the mitochondrion matrix. The catalysed reaction is glutaryl-CoA + oxidized [electron-transfer flavoprotein] + 2 H(+) = (2E)-butenoyl-CoA + reduced [electron-transfer flavoprotein] + CO2. It functions in the pathway amino-acid metabolism; lysine degradation. The protein operates within amino-acid metabolism; tryptophan metabolism. In terms of biological role, catalyzes the oxidative decarboxylation of glutaryl-CoA to crotonyl-CoA and CO(2) in the degradative pathway of L-lysine, L-hydroxylysine, and L-tryptophan metabolism. It uses electron transfer flavoprotein as its electron acceptor. The protein is Glutaryl-CoA dehydrogenase, mitochondrial (GCDH) of Sus scrofa (Pig).